The sequence spans 146 residues: Hemoglobin subunit beta/beta' (146 aa).

The 145-residue stretch at 2-146 folds into the Globin domain; that stretch reads HWSAEEKQLI…VAHALARKYH (145 aa). Residues His-63 and His-92 each contribute to the heme b site.

It belongs to the globin family. As to quaternary structure, heterotetramer of two alpha chains and two beta chains. As to expression, red blood cells.

In terms of biological role, involved in oxygen transport from the lung to the various peripheral tissues. This Chroicocephalus ridibundus (Black-headed gull) protein is Hemoglobin subunit beta/beta' (HBB).